Here is a 364-residue protein sequence, read N- to C-terminus: Chorismate synthase (364 aa).

Arg-48 and Arg-54 together coordinate NADP(+). FMN contacts are provided by residues 125–127 (RSS), 238–239 (NA), Gly-278, 293–297 (KPTSS), and Arg-319.

This sequence belongs to the chorismate synthase family. As to quaternary structure, homotetramer. Requires FMNH2 as cofactor.

The catalysed reaction is 5-O-(1-carboxyvinyl)-3-phosphoshikimate = chorismate + phosphate. It functions in the pathway metabolic intermediate biosynthesis; chorismate biosynthesis; chorismate from D-erythrose 4-phosphate and phosphoenolpyruvate: step 7/7. Its function is as follows. Catalyzes the anti-1,4-elimination of the C-3 phosphate and the C-6 proR hydrogen from 5-enolpyruvylshikimate-3-phosphate (EPSP) to yield chorismate, which is the branch point compound that serves as the starting substrate for the three terminal pathways of aromatic amino acid biosynthesis. This reaction introduces a second double bond into the aromatic ring system. This chain is Chorismate synthase, found in Shewanella sediminis (strain HAW-EB3).